Here is a 115-residue protein sequence, read N- to C-terminus: Large ribosomal subunit protein bL19 (115 aa).

Belongs to the bacterial ribosomal protein bL19 family.

This protein is located at the 30S-50S ribosomal subunit interface and may play a role in the structure and function of the aminoacyl-tRNA binding site. This Lacticaseibacillus casei (strain BL23) (Lactobacillus casei) protein is Large ribosomal subunit protein bL19.